Here is a 248-residue protein sequence, read N- to C-terminus: 3-deoxy-manno-octulosonate cytidylyltransferase (248 aa).

It belongs to the KdsB family.

Its subcellular location is the cytoplasm. The catalysed reaction is 3-deoxy-alpha-D-manno-oct-2-ulosonate + CTP = CMP-3-deoxy-beta-D-manno-octulosonate + diphosphate. The protein operates within nucleotide-sugar biosynthesis; CMP-3-deoxy-D-manno-octulosonate biosynthesis; CMP-3-deoxy-D-manno-octulosonate from 3-deoxy-D-manno-octulosonate and CTP: step 1/1. Its pathway is bacterial outer membrane biogenesis; lipopolysaccharide biosynthesis. In terms of biological role, activates KDO (a required 8-carbon sugar) for incorporation into bacterial lipopolysaccharide in Gram-negative bacteria. This is 3-deoxy-manno-octulosonate cytidylyltransferase from Salmonella paratyphi A (strain ATCC 9150 / SARB42).